A 276-amino-acid chain; its full sequence is Ribosomal RNA small subunit methyltransferase A (276 aa).

N27, L29, G54, E75, D101, and N122 together coordinate S-adenosyl-L-methionine.

This sequence belongs to the class I-like SAM-binding methyltransferase superfamily. rRNA adenine N(6)-methyltransferase family. RsmA subfamily.

Its subcellular location is the cytoplasm. It catalyses the reaction adenosine(1518)/adenosine(1519) in 16S rRNA + 4 S-adenosyl-L-methionine = N(6)-dimethyladenosine(1518)/N(6)-dimethyladenosine(1519) in 16S rRNA + 4 S-adenosyl-L-homocysteine + 4 H(+). Specifically dimethylates two adjacent adenosines (A1518 and A1519) in the loop of a conserved hairpin near the 3'-end of 16S rRNA in the 30S particle. May play a critical role in biogenesis of 30S subunits. The chain is Ribosomal RNA small subunit methyltransferase A from Brucella melitensis biotype 1 (strain ATCC 23456 / CCUG 17765 / NCTC 10094 / 16M).